A 676-amino-acid polypeptide reads, in one-letter code: Zinc finger CCCH domain-containing protein 38 (676 aa).

Disordered regions lie at residues 1-134 (MEMS…DHLF), 172-217 (SSDY…RSSN), 245-307 (RKQP…SWID), 487-506 (SVQPNQATTQSNVVSSNPNQ), and 533-594 (IQEV…DPKG). A compositionally biased stretch (basic and acidic residues) spans 12-21 (SKWDSKEDTH). Polar residues predominate over residues 58–79 (RVSQNNDNSYFSEQDGTRQQFV). 3 stretches are compositionally biased toward basic and acidic residues: residues 101–110 (ARRDAGSYDR), 124–134 (EFNKRGSDHLF), and 192–212 (SEFTGEKETQRRDGGDGEGGF). The C3H1-type zinc-finger motif lies at 214-243 (RSSNIPCKFFAAGTGFCRNGKYCRFSHHVA). Low complexity predominate over residues 251–262 (NNNNFYRQDNNN). Basic and acidic residues predominate over residues 269-278 (KWNDVERLDN). The segment covering 538-562 (LDPKENGDKKTDEASKEEEGKKTGE) has biased composition (basic and acidic residues). Residues 563-583 (DTNDAENVVDEDEDGDDDGSD) show a composition bias toward acidic residues. Basic and acidic residues predominate over residues 584–594 (EENKKEKDPKG).

In Arabidopsis thaliana (Mouse-ear cress), this protein is Zinc finger CCCH domain-containing protein 38.